The chain runs to 291 residues: N-acetylmannosamine kinase (291 aa).

ATP is bound by residues 5–12 (AIDIGGTK) and 132–139 (GVGGGVVS). The Zn(2+) site is built by His-156, Cys-166, Cys-168, and Cys-173.

It belongs to the ROK (NagC/XylR) family. NanK subfamily. Homodimer.

The enzyme catalyses an N-acyl-D-mannosamine + ATP = an N-acyl-D-mannosamine 6-phosphate + ADP + H(+). It functions in the pathway amino-sugar metabolism; N-acetylneuraminate degradation; D-fructose 6-phosphate from N-acetylneuraminate: step 2/5. In terms of biological role, catalyzes the phosphorylation of N-acetylmannosamine (ManNAc) to ManNAc-6-P. The chain is N-acetylmannosamine kinase from Escherichia coli O9:H4 (strain HS).